Here is a 156-residue protein sequence, read N- to C-terminus: Arginine repressor (156 aa).

Belongs to the ArgR family.

The protein localises to the cytoplasm. It participates in amino-acid biosynthesis; L-arginine biosynthesis [regulation]. Its function is as follows. Regulates arginine biosynthesis genes. This chain is Arginine repressor, found in Shewanella piezotolerans (strain WP3 / JCM 13877).